Reading from the N-terminus, the 564-residue chain is MFEDNNQKRPLYIPYAGPALLETPLLNKGCAFTSEERSSFNLEGLLPQNIETIEEQAERAYRQFMAFGNDLDKHIYLRNIQDTNETLFYRLLHNHLTEMLPVIYTPTVGKACEEFSNIYRRARGLFISYPDKDRIDDMLQNATKQNVKVIVVTDGERILGLGDQGIGGMGIPIGKLSLYTACGGISPAYCLPVVLDVGTNNQQLLSDPFYMGWRNPRISGEEYAEFVDAFIQAVKRRWPDILLQFEDFAQNNAMPLLNRYKNELCCFNDDIQGTAAVTLGSLIAACKASGAKLSEKRVAFLGAGSAGCGIAEQIVAQMKAEGLTDAQARGRVFMVDRFGLITDKIPNQLDFQRRLSQPVGRIADWPVGDNISLLEVMEHGRPDILIGVSGQPGLFTEEVVKTMHKHCTRPIIFPLSNPTSRVEATPADLIRWTDGQALVATGSPFAPVEYKGKRYVIAQCNNSFIFPGIGLGVIASGATRVTDAMLMSASRALAECSPLVKGAEGSLLPDLADIHQVSRYIAKMVAKTAMLQGKAVQTPDEVIDQAIEANFWRPEYRRYRRTSF.

Catalysis depends on Tyr104, which acts as the Proton donor. Arg157 contributes to the NAD(+) binding site. The Proton acceptor role is filled by Lys175. Residues Glu246, Asp247, and Asp270 each contribute to the a divalent metal cation site. NAD(+) contacts are provided by Asp270 and Asn417.

The protein belongs to the malic enzymes family. In terms of assembly, homotetramer. Mg(2+) is required as a cofactor. The cofactor is Mn(2+).

The enzyme catalyses (S)-malate + NAD(+) = pyruvate + CO2 + NADH. The catalysed reaction is oxaloacetate + H(+) = pyruvate + CO2. This Aeromonas salmonicida (strain A449) protein is NAD-dependent malic enzyme.